A 253-amino-acid chain; its full sequence is Imidazole glycerol phosphate synthase subunit HisF (253 aa).

Active-site residues include Asp11 and Asp130.

It belongs to the HisA/HisF family. In terms of assembly, heterodimer of HisH and HisF.

The protein localises to the cytoplasm. The enzyme catalyses 5-[(5-phospho-1-deoxy-D-ribulos-1-ylimino)methylamino]-1-(5-phospho-beta-D-ribosyl)imidazole-4-carboxamide + L-glutamine = D-erythro-1-(imidazol-4-yl)glycerol 3-phosphate + 5-amino-1-(5-phospho-beta-D-ribosyl)imidazole-4-carboxamide + L-glutamate + H(+). The protein operates within amino-acid biosynthesis; L-histidine biosynthesis; L-histidine from 5-phospho-alpha-D-ribose 1-diphosphate: step 5/9. IGPS catalyzes the conversion of PRFAR and glutamine to IGP, AICAR and glutamate. The HisF subunit catalyzes the cyclization activity that produces IGP and AICAR from PRFAR using the ammonia provided by the HisH subunit. This chain is Imidazole glycerol phosphate synthase subunit HisF, found in Cereibacter sphaeroides (strain ATCC 17025 / ATH 2.4.3) (Rhodobacter sphaeroides).